The chain runs to 367 residues: 4-hydroxyphenylpyruvate dioxygenase (367 aa).

2 consecutive VOC domains span residues 3–135 (GFDH…FVDR) and 166–324 (LIDH…IFTN). 3 residues coordinate Fe cation: histidine 169, histidine 252, and glutamate 335.

Belongs to the 4HPPD family. The cofactor is Fe cation.

The catalysed reaction is 3-(4-hydroxyphenyl)pyruvate + O2 = homogentisate + CO2. It functions in the pathway amino-acid degradation; L-phenylalanine degradation; acetoacetate and fumarate from L-phenylalanine: step 3/6. Key enzyme in the degradation of tyrosine. The protein is 4-hydroxyphenylpyruvate dioxygenase (hpd) of Dictyostelium discoideum (Social amoeba).